We begin with the raw amino-acid sequence, 123 residues long: Large ribosomal subunit protein uL14 (123 aa).

Belongs to the universal ribosomal protein uL14 family. As to quaternary structure, part of the 50S ribosomal subunit. Forms a cluster with proteins L3 and L19. In the 70S ribosome, L14 and L19 interact and together make contacts with the 16S rRNA in bridges B5 and B8.

Its function is as follows. Binds to 23S rRNA. Forms part of two intersubunit bridges in the 70S ribosome. The chain is Large ribosomal subunit protein uL14 from Vibrio vulnificus (strain CMCP6).